A 340-amino-acid polypeptide reads, in one-letter code: Heat-inducible transcription repressor HrcA (340 aa).

This sequence belongs to the HrcA family.

Functionally, negative regulator of class I heat shock genes (grpE-dnaK-dnaJ and groELS operons). Prevents heat-shock induction of these operons. The polypeptide is Heat-inducible transcription repressor HrcA (Burkholderia ambifaria (strain MC40-6)).